We begin with the raw amino-acid sequence, 201 residues long: Protein OPI10 homolog (201 aa).

It belongs to the OPI10 family.

The chain is Protein OPI10 homolog from Anopheles gambiae (African malaria mosquito).